The sequence spans 668 residues: DNA ligase (668 aa).

Residues D32–D36, S81–L82, and E111 contribute to the NAD(+) site. K113 (N6-AMP-lysine intermediate) is an active-site residue. Residues R134, E171, K290, and K314 each coordinate NAD(+). Residues C408, C411, C426, and C432 each contribute to the Zn(2+) site. The 78-residue stretch at E591–S668 folds into the BRCT domain.

This sequence belongs to the NAD-dependent DNA ligase family. LigA subfamily. Requires Mg(2+) as cofactor. The cofactor is Mn(2+).

The catalysed reaction is NAD(+) + (deoxyribonucleotide)n-3'-hydroxyl + 5'-phospho-(deoxyribonucleotide)m = (deoxyribonucleotide)n+m + AMP + beta-nicotinamide D-nucleotide.. In terms of biological role, DNA ligase that catalyzes the formation of phosphodiester linkages between 5'-phosphoryl and 3'-hydroxyl groups in double-stranded DNA using NAD as a coenzyme and as the energy source for the reaction. It is essential for DNA replication and repair of damaged DNA. The chain is DNA ligase from Shewanella pealeana (strain ATCC 700345 / ANG-SQ1).